Here is a 339-residue protein sequence, read N- to C-terminus: Ferredoxin--NADP reductase (339 aa).

FAD is bound by residues Asp-36, Gln-44, Tyr-49, Val-89, Phe-123, Asp-290, and Thr-331.

Belongs to the ferredoxin--NADP reductase type 2 family. As to quaternary structure, homodimer. It depends on FAD as a cofactor.

It catalyses the reaction 2 reduced [2Fe-2S]-[ferredoxin] + NADP(+) + H(+) = 2 oxidized [2Fe-2S]-[ferredoxin] + NADPH. In Acidiphilium cryptum (strain JF-5), this protein is Ferredoxin--NADP reductase.